A 539-amino-acid chain; its full sequence is Propionyl-CoA carboxylase beta chain, mitochondrial (539 aa).

Residues 1–28 (MAAALRVAAVGARLSVLASGLRAAVRSL) constitute a mitochondrion transit peptide. The CoA carboxyltransferase N-terminal domain maps to 32 to 290 (ATSVNERIEN…SSQDPAPVRE (259 aa)). The tract at residues 32 to 533 (ATSVNERIEN…SKKVQRPWRK (502 aa)) is carboxyltransferase. S71 is modified (phosphoserine). Residue K99 is modified to N6-acetyllysine; alternate. K99 is subject to N6-succinyllysine; alternate. Position 248 is an N6-succinyllysine (K248). One can recognise a CoA carboxyltransferase C-terminal domain in the interval 294–533 (PSDRLVPELD…SKKVQRPWRK (240 aa)). Residues 325–358 (DEREFFEIMPNYAKNIIVGFARMNGRTVGIVGNQ) are acyl-CoA binding. 2 positions are modified to N6-acetyllysine; alternate: K474 and K489. Residues K474 and K489 each carry the N6-succinyllysine; alternate modification.

Belongs to the AccD/PCCB family. The holoenzyme is a dodecamer composed of 6 PCCA/alpha subunits and 6 PCCB/beta subunits.

It is found in the mitochondrion matrix. It carries out the reaction propanoyl-CoA + hydrogencarbonate + ATP = (S)-methylmalonyl-CoA + ADP + phosphate + H(+). The enzyme catalyses butanoyl-CoA + hydrogencarbonate + ATP = (2S)-ethylmalonyl-CoA + ADP + phosphate + H(+). It functions in the pathway metabolic intermediate metabolism; propanoyl-CoA degradation; succinyl-CoA from propanoyl-CoA: step 1/3. This is one of the 2 subunits of the biotin-dependent propionyl-CoA carboxylase (PCC), a mitochondrial enzyme involved in the catabolism of odd chain fatty acids, branched-chain amino acids isoleucine, threonine, methionine, and valine and other metabolites. Propionyl-CoA carboxylase catalyzes the carboxylation of propionyl-CoA/propanoyl-CoA to D-methylmalonyl-CoA/(S)-methylmalonyl-CoA. Within the holoenzyme, the alpha subunit catalyzes the ATP-dependent carboxylation of the biotin carried by the biotin carboxyl carrier (BCC) domain, while the beta subunit then transfers the carboxyl group from carboxylated biotin to propionyl-CoA. Propionyl-CoA carboxylase also significantly acts on butyryl-CoA/butanoyl-CoA, which is converted to ethylmalonyl-CoA/(2S)-ethylmalonyl-CoA at a much lower rate. Other alternative minor substrates include (2E)-butenoyl-CoA/crotonoyl-CoA. This chain is Propionyl-CoA carboxylase beta chain, mitochondrial, found in Homo sapiens (Human).